We begin with the raw amino-acid sequence, 556 residues long: Guanine nucleotide-binding protein-like 3 homolog (556 aa).

The disordered stretch occupies residues 29–50 (NRKVKKEAKKNGTTNKKEKTIS). The stretch at 58-95 (KEEILVQAEQEREKIKVRQEAAKEAAKIHRIEKRKNNL) forms a coiled coil. The CP-type G domain maps to 138-317 (ASEVRKTVEI…LIDSPGVILV (180 aa)). Residues 184–187 (NKID), 266–273 (GFPNVGKS), and 310–313 (DSPG) each bind GTP. 2 disordered regions span residues 461–508 (APHN…PESL) and 525–556 (KKQK…AMEM). Positions 466 to 478 (DEEEDDDDEMETD) are enriched in acidic residues. The segment covering 525–535 (KKQKKKSKKTA) has biased composition (basic residues).

The protein belongs to the TRAFAC class YlqF/YawG GTPase family.

It localises to the nucleus. Functionally, may play a role in regulating cellular proliferation in both germline and somatic tissues. This is Guanine nucleotide-binding protein-like 3 homolog from Caenorhabditis elegans.